The chain runs to 63 residues: MPKMKTKTAAAKRVRLTATGKVMHAGSGMRHNLEHKSARKRRALKRDDVLQTAQAKKMKGLLG.

Residues 26–50 (GSGMRHNLEHKSARKRRALKRDDVL) form a disordered region.

This sequence belongs to the bacterial ribosomal protein bL35 family.

The polypeptide is Large ribosomal subunit protein bL35 (Bifidobacterium animalis subsp. lactis (strain AD011)).